A 335-amino-acid polypeptide reads, in one-letter code: Taste receptor type 2 member 119 (335 aa).

At 1 to 7 (MMEGHML) the chain is on the extracellular side. Residues 8-28 (FFLLVVVVQFLTGVLANGLIV) form a helical membrane-spanning segment. Residues 29–43 (VVNAIDLIMWKKMAP) are Cytoplasmic-facing. Residues 44–64 (LDLLLFCLATSRIILQLCILF) form a helical membrane-spanning segment. Residues 65 to 81 (AQLGLSCLVRHTLFADN) lie on the Extracellular side of the membrane. A glycan (N-linked (GlcNAc...) asparagine) is linked at Asn81. Residues 82-102 (VTFVYIINELSLWFATWLGVF) form a helical membrane-spanning segment. At 103 to 124 (YCAKIATIPHPLFLWLKMRISR) the chain is on the cytoplasmic side. Residues 125 to 145 (LVPWLILASVVYVTVTTFIHS) traverse the membrane as a helical segment. The Extracellular segment spans residues 146–176 (RETSELPKQIFISFFSKNTTRVRPAHATLLS). N-linked (GlcNAc...) asparagine glycosylation is present at Asn163. A helical transmembrane segment spans residues 177 to 197 (VFVFGLTLPFLIFTVAVLLLL). At 198 to 224 (SSLWNHSRQMRTMVGTREPSRHALVSA) the chain is on the cytoplasmic side. The helical transmembrane segment at 225 to 245 (MLSILSFLILYLSHDMVAVLI) threads the bilayer. Topologically, residues 246 to 256 (CTQGLHFGSRT) are extracellular. The helical transmembrane segment at 257–277 (FAFCLLVIGMYPSLHSIVLIL) threads the bilayer. Residues 278–335 (GNPKLKRNAKTFIVHCKCCHCARAWVTSRNPRLSDLPVPATHHSANKTSCSEACIMPS) are Cytoplasmic-facing.

The protein belongs to the G-protein coupled receptor T2R family. Expressed in subsets of taste receptor cells of the tongue and palate epithelium and exclusively in gustducin-positive cells. Expressed in 15% taste bud cells in circumvallate and foliate papillae but only in 2% in fungiform papillae. Expressed in the gastro and duodenal tissue. Not expressed in colon, liver, heart and kidney.

Its subcellular location is the membrane. Functionally, gustducin-coupled receptor implicated in the perception of bitter compounds in the oral cavity and the gastrointestinal tract. Signals through PLCB2 and the calcium-regulated cation channel TRPM5. The polypeptide is Taste receptor type 2 member 119 (Tas2r119) (Mus musculus (Mouse)).